Consider the following 577-residue polypeptide: Vacuolar protein sorting-associated protein 45 (577 aa).

This sequence belongs to the STXBP/unc-18/SEC1 family. In terms of assembly, interacts with PEP7 and TLG2.

It is found in the cytoplasm. The protein localises to the vacuole membrane. Essential for vacuolar protein sorting. Function in membrane traffic between the Golgi and the vacuole. The polypeptide is Vacuolar protein sorting-associated protein 45 (VPS45) (Saccharomyces cerevisiae (strain ATCC 204508 / S288c) (Baker's yeast)).